The chain runs to 415 residues: Gamma-glutamyl phosphate reductase (415 aa).

The protein belongs to the gamma-glutamyl phosphate reductase family.

Its subcellular location is the cytoplasm. The catalysed reaction is L-glutamate 5-semialdehyde + phosphate + NADP(+) = L-glutamyl 5-phosphate + NADPH + H(+). It functions in the pathway amino-acid biosynthesis; L-proline biosynthesis; L-glutamate 5-semialdehyde from L-glutamate: step 2/2. Catalyzes the NADPH-dependent reduction of L-glutamate 5-phosphate into L-glutamate 5-semialdehyde and phosphate. The product spontaneously undergoes cyclization to form 1-pyrroline-5-carboxylate. In Listeria innocua serovar 6a (strain ATCC BAA-680 / CLIP 11262), this protein is Gamma-glutamyl phosphate reductase.